The primary structure comprises 836 residues: Protein IWS1 homolog A (836 aa).

The disordered stretch occupies residues 1-542 (MEADNYSPEH…DMKSGKMGDY (542 aa)). 8 stretches are compositionally biased toward basic and acidic residues: residues 20–36 (QDER…EQRS), 43–122 (HQSE…DRSP), 133–148 (EPVR…DVPR), 157–186 (DERH…DKAP), 206–218 (DSKD…HAAS), 288–309 (VPVK…KASD), 370–386 (RSSE…KKLQ), and 458–469 (ERKSKTETKSAD). A compositionally biased stretch (acidic residues) spans 476–485 (SDSENEEENL). Residues 533 to 542 (DMKSGKMGDY) are compositionally biased toward basic and acidic residues. In terms of domain architecture, TFIIS N-terminal spans 631–709 (SAIKEWLTPL…NEWSRPIFGL (79 aa)). Residues 714-746 (KGMTREEREQRDIEQMPQRRRMSSSGGQTPRRD) form a disordered region. A compositionally biased stretch (basic and acidic residues) spans 716-727 (MTREEREQRDIE).

It belongs to the IWS1 family.

Its subcellular location is the nucleus. Its function is as follows. Transcription factor which plays a key role in defining the composition of the RNA polymerase II (RNAPII) elongation complex and in modulating the production of mature mRNA transcripts. This is Protein IWS1 homolog A (iws1-a) from Xenopus laevis (African clawed frog).